Here is a 155-residue protein sequence, read N- to C-terminus: Deoxyuridine 5'-triphosphate nucleotidohydrolase (155 aa).

Substrate contacts are provided by residues Arg74–Gly76, Asn87, and Leu91–Asp93.

It belongs to the dUTPase family. It depends on Mg(2+) as a cofactor.

The catalysed reaction is dUTP + H2O = dUMP + diphosphate + H(+). It participates in pyrimidine metabolism; dUMP biosynthesis; dUMP from dCTP (dUTP route): step 2/2. Functionally, this enzyme is involved in nucleotide metabolism: it produces dUMP, the immediate precursor of thymidine nucleotides and it decreases the intracellular concentration of dUTP so that uracil cannot be incorporated into DNA. The sequence is that of Deoxyuridine 5'-triphosphate nucleotidohydrolase from Xanthomonas oryzae pv. oryzae (strain MAFF 311018).